Here is a 238-residue protein sequence, read N- to C-terminus: Ribonuclease 3 (238 aa).

Residues valine 8–glycine 135 enclose the RNase III domain. Residue glutamate 48 participates in Mg(2+) binding. Residue aspartate 52 is part of the active site. Residues aspartate 121 and glutamate 124 each coordinate Mg(2+). Residue glutamate 124 is part of the active site. A DRBM domain is found at aspartate 161–glycine 230.

It belongs to the ribonuclease III family. Homodimer. Requires Mg(2+) as cofactor.

It is found in the cytoplasm. It catalyses the reaction Endonucleolytic cleavage to 5'-phosphomonoester.. Digests double-stranded RNA. Involved in the processing of primary rRNA transcript to yield the immediate precursors to the large and small rRNAs (23S and 16S). Processes some mRNAs, and tRNAs when they are encoded in the rRNA operon. Processes pre-crRNA and tracrRNA of type II CRISPR loci if present in the organism. This chain is Ribonuclease 3, found in Phenylobacterium zucineum (strain HLK1).